The chain runs to 1047 residues: Atrial natriuretic peptide receptor 2 (1047 aa).

Residues 1 to 16 form the signal peptide; that stretch reads MALPSLLLVVAALAGG. At 17–458 the chain is on the extracellular side; the sequence is VRPPGARNLT…DKTPLSTLAI (442 aa). Residues Asn24 and Asn35 are each glycosylated (N-linked (GlcNAc...) asparagine). Cys75 and Cys101 form a disulfide bridge. Asn161, Asn195, Asn244, Asn277, and Asn349 each carry an N-linked (GlcNAc...) asparagine glycan. Residues 459-478 form a helical membrane-spanning segment; that stretch reads VALGTGITFIMFGVSSFLIF. Residues 479–1047 are Cytoplasmic-facing; the sequence is RKLMLEKELA…GERKGPPGLL (569 aa). Residue Ser513 is modified to Phosphoserine. Positions 513-786 constitute a Protein kinase domain; it reads SRLTLSLRGS…PDFGQIKGFI (274 aa). The residue at position 516 (Thr516) is a Phosphothreonine. Phosphoserine is present on residues Ser518, Ser522, Ser523, and Ser526. Thr529 carries the phosphothreonine modification. Residues 861 to 991 enclose the Guanylate cyclase domain; it reads TIYFSDIVGF…DTVNTASRME (131 aa).

This sequence belongs to the adenylyl cyclase class-4/guanylyl cyclase family. Post-translationally, phosphorylated. Phosphorylation of the protein kinase-like domain is required for full activation by CNP. Glycosylated.

It localises to the cell membrane. The catalysed reaction is GTP = 3',5'-cyclic GMP + diphosphate. Functionally, receptor for the C-type natriuretic peptide NPPC/CNP hormone. Has guanylate cyclase activity upon binding of its ligand. May play a role in the regulation of skeletal growth. This chain is Atrial natriuretic peptide receptor 2 (Npr2), found in Rattus norvegicus (Rat).